Reading from the N-terminus, the 156-residue chain is ATP synthase subunit b (156 aa).

The chain crosses the membrane as a helical span at residues 7–29; sequence LLGQAISFALFVWFCMKYVWPPL.

This sequence belongs to the ATPase B chain family. In terms of assembly, F-type ATPases have 2 components, F(1) - the catalytic core - and F(0) - the membrane proton channel. F(1) has five subunits: alpha(3), beta(3), gamma(1), delta(1), epsilon(1). F(0) has three main subunits: a(1), b(2) and c(10-14). The alpha and beta chains form an alternating ring which encloses part of the gamma chain. F(1) is attached to F(0) by a central stalk formed by the gamma and epsilon chains, while a peripheral stalk is formed by the delta and b chains.

Its subcellular location is the cell inner membrane. In terms of biological role, f(1)F(0) ATP synthase produces ATP from ADP in the presence of a proton or sodium gradient. F-type ATPases consist of two structural domains, F(1) containing the extramembraneous catalytic core and F(0) containing the membrane proton channel, linked together by a central stalk and a peripheral stalk. During catalysis, ATP synthesis in the catalytic domain of F(1) is coupled via a rotary mechanism of the central stalk subunits to proton translocation. Functionally, component of the F(0) channel, it forms part of the peripheral stalk, linking F(1) to F(0). The protein is ATP synthase subunit b of Vibrio alginolyticus.